The primary structure comprises 534 residues: CD276 antigen (534 aa).

The signal sequence occupies residues 1–28 (MLRRRGSPGMGVHVGAALGALWFCLTGA). The Ig-like V-type 1 domain maps to 29 to 139 (LEVQVPEDPV…GSAAVSLQVA (111 aa)). Residues 29-466 (LEVQVPEDPV…GQPMTFPPEA (438 aa)) lie on the Extracellular side of the membrane. 4 disulfide bridges follow: Cys-50–Cys-122, Cys-165–Cys-220, Cys-268–Cys-340, and Cys-383–Cys-438. 6 N-linked (GlcNAc...) asparagine glycosylation sites follow: Asn-104, Asn-189, Asn-215, Asn-322, Asn-407, and Asn-433. The Ig-like C2-type 1 domain maps to 145–238 (PSMTLEPNKD…QDAHSSVTIT (94 aa)). Residues 243 to 357 (PTGAVEVQVP…GSAAVSLQVA (115 aa)) form the Ig-like V-type 2 domain. Positions 363–456 (PSMTLEPNKD…QDAHGSVTIT (94 aa)) constitute an Ig-like C2-type 2 domain. The chain crosses the membrane as a helical span at residues 467–487 (LWVTVGLSVCLIALLVALAFV). At 488–534 (CWRKIKQSCEEENAGAEDQDGEGEGSKTALQPLKHSDSKEDDGQEIA) the chain is on the cytoplasmic side. Residues 498-510 (EENAGAEDQDGEG) show a composition bias toward acidic residues. Residues 498 to 534 (EENAGAEDQDGEGEGSKTALQPLKHSDSKEDDGQEIA) are disordered. Ser-525 is subject to Phosphoserine.

This sequence belongs to the immunoglobulin superfamily. BTN/MOG family. In terms of assembly, interacts with TREML2 and this interaction enhances T-cell activation. In terms of tissue distribution, ubiquitous but not detectable in peripheral blood lymphocytes or granulocytes. Weakly expressed in resting monocytes. Expressed in dendritic cells derived from monocytes. Expressed in epithelial cells of sinonasal tissue. Expressed in extravillous trophoblast cells and Hofbauer cells of the first trimester placenta and term placenta.

It localises to the membrane. Its function is as follows. May participate in the regulation of T-cell-mediated immune response. May play a protective role in tumor cells by inhibiting natural-killer mediated cell lysis as well as a role of marker for detection of neuroblastoma cells. May be involved in the development of acute and chronic transplant rejection and in the regulation of lymphocytic activity at mucosal surfaces. Could also play a key role in providing the placenta and fetus with a suitable immunological environment throughout pregnancy. Both isoform 1 and isoform 2 appear to be redundant in their ability to modulate CD4 T-cell responses. Isoform 2 is shown to enhance the induction of cytotoxic T-cells and selectively stimulates interferon gamma production in the presence of T-cell receptor signaling. The sequence is that of CD276 antigen (CD276) from Homo sapiens (Human).